An 886-amino-acid polypeptide reads, in one-letter code: Protein translocase subunit SecA (886 aa).

Residues Gln-81, 99–103, and Asp-489 contribute to the ATP site; that span reads GEGKT.

Belongs to the SecA family.

Its subcellular location is the plastid. It is found in the chloroplast stroma. The protein resides in the chloroplast thylakoid membrane. The enzyme catalyses ATP + H2O + cellular proteinSide 1 = ADP + phosphate + cellular proteinSide 2.. Its function is as follows. Has a central role in coupling the hydrolysis of ATP to the transfer of proteins across the thylakoid membrane. In Phaeodactylum tricornutum (strain CCAP 1055/1), this protein is Protein translocase subunit SecA.